The primary structure comprises 608 residues: Alpha-glycerophosphate oxidase (608 aa).

21 to 49 (DLLIIGGGITGAGVALQAAASGLETGLIE) contacts FAD. The disordered stretch occupies residues 393–418 (SAVSKLESSTSEKHLDPSAVSRGSSL).

This sequence belongs to the FAD-dependent glycerol-3-phosphate dehydrogenase family. FAD is required as a cofactor.

It localises to the cell membrane. The catalysed reaction is sn-glycerol 3-phosphate + O2 = dihydroxyacetone phosphate + H2O2. It participates in membrane lipid metabolism; glycerophospholipid metabolism. This chain is Alpha-glycerophosphate oxidase (glpO), found in Streptococcus pneumoniae serotype 4 (strain ATCC BAA-334 / TIGR4).